Here is a 337-residue protein sequence, read N- to C-terminus: N-acetyl-gamma-glutamyl-phosphate reductase (337 aa).

Cys155 is a catalytic residue.

It belongs to the NAGSA dehydrogenase family. Type 1 subfamily.

The protein localises to the cytoplasm. The catalysed reaction is N-acetyl-L-glutamate 5-semialdehyde + phosphate + NADP(+) = N-acetyl-L-glutamyl 5-phosphate + NADPH + H(+). It participates in amino-acid biosynthesis; L-arginine biosynthesis; N(2)-acetyl-L-ornithine from L-glutamate: step 3/4. Functionally, catalyzes the NADPH-dependent reduction of N-acetyl-5-glutamyl phosphate to yield N-acetyl-L-glutamate 5-semialdehyde. The chain is N-acetyl-gamma-glutamyl-phosphate reductase from Alteromonas mediterranea (strain DSM 17117 / CIP 110805 / LMG 28347 / Deep ecotype).